The primary structure comprises 487 residues: Argininosuccinate lyase (487 aa).

This sequence belongs to the lyase 1 family. Argininosuccinate lyase subfamily.

It localises to the cytoplasm. The enzyme catalyses 2-(N(omega)-L-arginino)succinate = fumarate + L-arginine. It participates in amino-acid biosynthesis; L-arginine biosynthesis; L-arginine from L-ornithine and carbamoyl phosphate: step 3/3. This is Argininosuccinate lyase from Methanothrix thermoacetophila (strain DSM 6194 / JCM 14653 / NBRC 101360 / PT) (Methanosaeta thermophila).